A 596-amino-acid polypeptide reads, in one-letter code: Elongation factor 4 (596 aa).

In terms of domain architecture, tr-type G spans 2-183 (ENIRNFSIIA…AIIKRIPAPK (182 aa)). GTP-binding positions include 14–19 (DHGKST) and 130–133 (NKID).

This sequence belongs to the TRAFAC class translation factor GTPase superfamily. Classic translation factor GTPase family. LepA subfamily.

The protein localises to the cell inner membrane. It carries out the reaction GTP + H2O = GDP + phosphate + H(+). Its function is as follows. Required for accurate and efficient protein synthesis under certain stress conditions. May act as a fidelity factor of the translation reaction, by catalyzing a one-codon backward translocation of tRNAs on improperly translocated ribosomes. Back-translocation proceeds from a post-translocation (POST) complex to a pre-translocation (PRE) complex, thus giving elongation factor G a second chance to translocate the tRNAs correctly. Binds to ribosomes in a GTP-dependent manner. In Campylobacter hominis (strain ATCC BAA-381 / DSM 21671 / CCUG 45161 / LMG 19568 / NCTC 13146 / CH001A), this protein is Elongation factor 4.